Consider the following 548-residue polypeptide: Chaperonin GroEL (548 aa).

ATP-binding positions include 30–33 (TLGP), K51, 87–91 (DGTTT), G415, and D495.

This sequence belongs to the chaperonin (HSP60) family. As to quaternary structure, forms a cylinder of 14 subunits composed of two heptameric rings stacked back-to-back. Interacts with the co-chaperonin GroES.

Its subcellular location is the cytoplasm. It catalyses the reaction ATP + H2O + a folded polypeptide = ADP + phosphate + an unfolded polypeptide.. In terms of biological role, together with its co-chaperonin GroES, plays an essential role in assisting protein folding. The GroEL-GroES system forms a nano-cage that allows encapsulation of the non-native substrate proteins and provides a physical environment optimized to promote and accelerate protein folding. The polypeptide is Chaperonin GroEL (Colwellia psychrerythraea (strain 34H / ATCC BAA-681) (Vibrio psychroerythus)).